A 207-amino-acid polypeptide reads, in one-letter code: Alpha-1-acid glycoprotein 8 (207 aa).

Residues Met1–Ala18 form the signal peptide. N-linked (GlcNAc...) asparagine glycans are attached at residues Asn25, Asn34, Asn76, Asn94, and Asn104. Cys91 and Cys184 are joined by a disulfide.

Belongs to the calycin superfamily. Lipocalin family. Expressed by the liver and secreted in plasma.

It localises to the secreted. Its function is as follows. Functions as a transport protein in the blood stream. Binds various ligands in the interior of its beta-barrel domain. Appears to function in modulating the activity of the immune system during the acute-phase reaction. The protein is Alpha-1-acid glycoprotein 8 (Orm8) of Mus caroli (Ryukyu mouse).